We begin with the raw amino-acid sequence, 266 residues long: Apolipoprotein A-I (266 aa).

Residues 1 to 18 (MKAALLTLAVLFLTGSQA) form the signal peptide. 2 repeat units span residues 67-88 (LKLL…EQIG) and 89-110 (PVTQ…QEMS). The tract at residues 67-266 (LKLLDNWDSL…DEATKKLNAQ (200 aa)) is 10 X approximate tandem repeats. At methionine 109 the chain carries Methionine sulfoxide. Residues 111 to 121 (KDLEEVKQKVQ) form a 3; half-length repeat. Repeat copies occupy residues 122–143 (PYLD…QKVA), 144–165 (PLGS…EKLS), 166–187 (PLAE…AQLA), 188–209 (PYSD…EGGG), and 210–231 (ASLA…EKAR). A 9; half-length repeat occupies 232–242 (PALEDLRQGLL). Residues 243 to 266 (PVLESFKVSLLAAIDEATKKLNAQ) form repeat 10.

This sequence belongs to the apolipoprotein A1/A4/E family. In terms of assembly, homodimer. Interacts with APOA1BP and CLU. Component of a sperm activating protein complex (SPAP), consisting of APOA1, an immunoglobulin heavy chain, an immunoglobulin light chain and albumin. Interacts with NDRG1. Interacts with SCGB3A2. Interacts with NAXE and YJEFN3. Palmitoylated. In terms of processing, glycosylated. Post-translationally, phosphorylation sites are present in the extracellular medium. Major protein of plasma HDL, also found in chylomicrons. Synthesized in the liver and small intestine.

Its subcellular location is the secreted. Its function is as follows. Participates in the reverse transport of cholesterol from tissues to the liver for excretion by promoting cholesterol efflux from tissues and by acting as a cofactor for the lecithin cholesterol acyltransferase (LCAT). As part of the SPAP complex, activates spermatozoa motility. In Canis lupus familiaris (Dog), this protein is Apolipoprotein A-I (APOA1).